The primary structure comprises 338 residues: Probable G-protein coupled receptor 160 (338 aa).

Residues 1-23 (MTALSSENCSFQYQLRQTNQPLD) lie on the Extracellular side of the membrane. Asn-8 is a glycosylation site (N-linked (GlcNAc...) asparagine). Residues 24-44 (VNYLLFLIILGKILLNILTLG) form a helical membrane-spanning segment. The Cytoplasmic portion of the chain corresponds to 45 to 58 (MRRKNTCQNFMEYF). The helical transmembrane segment at 59-79 (CISLAFVDLLLLVNISIILYF) threads the bilayer. Residues 80-93 (RDFVLLSIRFTKYH) lie on the Extracellular side of the membrane. A helical transmembrane segment spans residues 94–114 (ICLFTQIISFTYGFLHYPVFL). Topologically, residues 115-136 (TACIDYCLNFSKTTKLSFKCQK) are cytoplasmic. A helical transmembrane segment spans residues 137-157 (LFYFFTVILIWISVLAYVLGD). Over 158 to 177 (PAIYQSLKAQNAYSRHCPFY) the chain is Extracellular. The chain crosses the membrane as a helical span at residues 178 to 198 (VSIQSYWLSFFMVMILFVAFI). Residues 199-244 (TCWEEVTTLVQAIRITSYMNETILYFPFSSHSSYTVRSKKIFLSKL) lie on the Cytoplasmic side of the membrane. A helical membrane pass occupies residues 245–265 (IVCFLSTWLPFVLLQVIIVLL). The Extracellular portion of the chain corresponds to 266–268 (KVQ). A helical transmembrane segment spans residues 269–289 (IPAYIEMNIPWLYFVNSFLIA). The Cytoplasmic portion of the chain corresponds to 290-338 (TVYWFNCHKLNLKDIGLPLDPFVNWKCCFIPLTIPNLEQIEKPISIMIC).

Belongs to the G-protein coupled receptor 1 family.

The protein localises to the cell membrane. In terms of biological role, orphan receptor. This chain is Probable G-protein coupled receptor 160 (GPR160), found in Homo sapiens (Human).